The chain runs to 308 residues: Oxygen-dependent coproporphyrinogen-III oxidase (308 aa).

Ser-100 lines the substrate pocket. Residues His-104 and His-114 each coordinate a divalent metal cation. His-114 (proton donor) is an active-site residue. Asn-116–Arg-118 serves as a coordination point for substrate. A divalent metal cation contacts are provided by His-153 and His-183. Residues Tyr-248–Lys-283 are important for dimerization. Residue Gly-266–Arg-268 coordinates substrate.

It belongs to the aerobic coproporphyrinogen-III oxidase family. As to quaternary structure, homodimer. A divalent metal cation serves as cofactor.

The protein resides in the cytoplasm. It catalyses the reaction coproporphyrinogen III + O2 + 2 H(+) = protoporphyrinogen IX + 2 CO2 + 2 H2O. Its pathway is porphyrin-containing compound metabolism; protoporphyrin-IX biosynthesis; protoporphyrinogen-IX from coproporphyrinogen-III (O2 route): step 1/1. In terms of biological role, involved in the heme biosynthesis. Catalyzes the aerobic oxidative decarboxylation of propionate groups of rings A and B of coproporphyrinogen-III to yield the vinyl groups in protoporphyrinogen-IX. The protein is Oxygen-dependent coproporphyrinogen-III oxidase of Francisella tularensis subsp. holarctica (strain LVS).